Consider the following 110-residue polypeptide: Late cornified envelope-like proline-rich protein 1 (110 aa).

Residues M1–E24 form a disordered region.

It belongs to the cornifin (SPRR) family.

This is Late cornified envelope-like proline-rich protein 1 (LELP1) from Bos taurus (Bovine).